Here is a 343-residue protein sequence, read N- to C-terminus: Tetraacyldisaccharide 4'-kinase (343 aa).

58 to 65 contributes to the ATP binding site; sequence VAGGAGKT.

Belongs to the LpxK family.

It carries out the reaction a lipid A disaccharide + ATP = a lipid IVA + ADP + H(+). It participates in glycolipid biosynthesis; lipid IV(A) biosynthesis; lipid IV(A) from (3R)-3-hydroxytetradecanoyl-[acyl-carrier-protein] and UDP-N-acetyl-alpha-D-glucosamine: step 6/6. Transfers the gamma-phosphate of ATP to the 4'-position of a tetraacyldisaccharide 1-phosphate intermediate (termed DS-1-P) to form tetraacyldisaccharide 1,4'-bis-phosphate (lipid IVA). The chain is Tetraacyldisaccharide 4'-kinase from Polaromonas naphthalenivorans (strain CJ2).